The sequence spans 718 residues: ATP-dependent RNA helicase homolog DQX1 (718 aa).

Residues 54-222 enclose the Helicase ATP-binding domain; that stretch reads HLESSPTGVV…WGNSPIVRVP (169 aa). 67-74 contacts ATP; it reads GDPGSGKS. The short motif at 167–170 is the DEAQ box element; that stretch reads DEAQ. Residues 245–447 enclose the Helicase C-terminal domain; sequence ACQAVLELCQ…ALMRALEDLD (203 aa). The segment at 690 to 718 is disordered; that stretch reads QLREGTAEPPAAATETSSPQEYGDGCVLQ. Low complexity predominate over residues 696 to 708; it reads AEPPAAATETSSP.

As to expression, ubiquitous.

Its subcellular location is the nucleus. Might be involved in RNA metabolism; it is missing helicase motif III and may not have helicase activity. The sequence is that of ATP-dependent RNA helicase homolog DQX1 (Dqx1) from Mus musculus (Mouse).